A 1640-amino-acid polypeptide reads, in one-letter code: RING finger protein 17 (1640 aa).

The RING-type zinc finger occupies 30-73 (CTRCGRKVSVASGDHHKFPCGHAFCELCLLAPQEYTTSKCTDCE). Serine 134 carries the post-translational modification Phosphoserine. Position 229 is an N6-acetyllysine (lysine 229). 2 disordered regions span residues 348 to 376 (TDET…TKEM) and 413 to 435 (DDPI…APVG). Over residues 360 to 373 (APDRHLEGKKKQPT) the composition is skewed to basic and acidic residues. Tudor domains lie at 751 to 809 (CPLQ…FLEP) and 985 to 1044 (KWEC…LKTM). A compositionally biased stretch (basic and acidic residues) spans 1170–1184 (NEHKVPDSKGKKSES). The disordered stretch occupies residues 1170–1191 (NEHKVPDSKGKKSESRSTGCYR). 2 consecutive Tudor domains span residues 1246-1303 (SWKK…PDTP) and 1496-1556 (DFSS…LMQY).

In terms of assembly, interacts with MXD1, MXD3, MXD4, MXI1 and PIWIL1. Self-associates. In terms of tissue distribution, expressed at high levels in adult testis. Expressed in male germ cells (at protein level). Expressed at lower levels in adult thyroid, submaxillary gland, ovary and epididymis.

Its subcellular location is the cytoplasm. It localises to the nucleus. Functionally, seems to be involved in regulation of transcriptional activity of MYC. In vitro, inhibits DNA-binding activity of Mad-MAX heterodimers. Can recruit Mad transcriptional repressors (MXD1, MXD3, MXD4 and MXI1) to the cytoplasm. May be involved in spermiogenesis. In Mus musculus (Mouse), this protein is RING finger protein 17 (Rnf17).